The following is a 251-amino-acid chain: Ubiquinone/menaquinone biosynthesis C-methyltransferase UbiE (251 aa).

S-adenosyl-L-methionine-binding positions include Thr-74, Asp-95, and 123–124; that span reads NA.

It belongs to the class I-like SAM-binding methyltransferase superfamily. MenG/UbiE family.

The catalysed reaction is a 2-demethylmenaquinol + S-adenosyl-L-methionine = a menaquinol + S-adenosyl-L-homocysteine + H(+). It catalyses the reaction a 2-methoxy-6-(all-trans-polyprenyl)benzene-1,4-diol + S-adenosyl-L-methionine = a 5-methoxy-2-methyl-3-(all-trans-polyprenyl)benzene-1,4-diol + S-adenosyl-L-homocysteine + H(+). Its pathway is quinol/quinone metabolism; menaquinone biosynthesis; menaquinol from 1,4-dihydroxy-2-naphthoate: step 2/2. It participates in cofactor biosynthesis; ubiquinone biosynthesis. Functionally, methyltransferase required for the conversion of demethylmenaquinol (DMKH2) to menaquinol (MKH2) and the conversion of 2-polyprenyl-6-methoxy-1,4-benzoquinol (DDMQH2) to 2-polyprenyl-3-methyl-6-methoxy-1,4-benzoquinol (DMQH2). The sequence is that of Ubiquinone/menaquinone biosynthesis C-methyltransferase UbiE from Shewanella sp. (strain ANA-3).